The sequence spans 842 residues: MutS protein homolog him-14 (842 aa).

The interval Met-1 to Glu-21 is disordered. Gly-588 to Ser-595 is a binding site for ATP.

This sequence belongs to the DNA mismatch repair MutS family. As to quaternary structure, heterooligomer of him-14 and msh-5.

Its subcellular location is the nucleus. In terms of biological role, required during the pachytene stage of meiotic prophase for the formation of crossovers between homologous chromosomes. Together with msh-5 and zhp-3 plays a role in the activation of DNA damage-dependent apoptosis at the DNA damage checkpoint in pachytene cells. Not needed for pairing or synapsis. May promote crossing over by interfering with Holliday junction branch migration. Has no apparent role in DNA mismatch repair. The protein is MutS protein homolog him-14 of Caenorhabditis elegans.